The sequence spans 235 residues: Phosphoribosylaminoimidazole-succinocarboxamide synthase (235 aa).

This sequence belongs to the SAICAR synthetase family.

The enzyme catalyses 5-amino-1-(5-phospho-D-ribosyl)imidazole-4-carboxylate + L-aspartate + ATP = (2S)-2-[5-amino-1-(5-phospho-beta-D-ribosyl)imidazole-4-carboxamido]succinate + ADP + phosphate + 2 H(+). It functions in the pathway purine metabolism; IMP biosynthesis via de novo pathway; 5-amino-1-(5-phospho-D-ribosyl)imidazole-4-carboxamide from 5-amino-1-(5-phospho-D-ribosyl)imidazole-4-carboxylate: step 1/2. The protein is Phosphoribosylaminoimidazole-succinocarboxamide synthase of Streptococcus pneumoniae (strain ATCC 700669 / Spain 23F-1).